Reading from the N-terminus, the 500-residue chain is Probable cytosol aminopeptidase (500 aa).

Residues Lys265 and Asp270 each coordinate Mn(2+). Residue Lys277 is part of the active site. Residues Asp288, Asp347, and Glu349 each contribute to the Mn(2+) site. Arg351 is a catalytic residue.

This sequence belongs to the peptidase M17 family. It depends on Mn(2+) as a cofactor.

It is found in the cytoplasm. It catalyses the reaction Release of an N-terminal amino acid, Xaa-|-Yaa-, in which Xaa is preferably Leu, but may be other amino acids including Pro although not Arg or Lys, and Yaa may be Pro. Amino acid amides and methyl esters are also readily hydrolyzed, but rates on arylamides are exceedingly low.. The enzyme catalyses Release of an N-terminal amino acid, preferentially leucine, but not glutamic or aspartic acids.. Presumably involved in the processing and regular turnover of intracellular proteins. Catalyzes the removal of unsubstituted N-terminal amino acids from various peptides. This chain is Probable cytosol aminopeptidase, found in Bdellovibrio bacteriovorus (strain ATCC 15356 / DSM 50701 / NCIMB 9529 / HD100).